Consider the following 533-residue polypeptide: Pre-mRNA-splicing factor cwf24 (533 aa).

Residues 1–17 (MEQKNLNINQASGSKIN) show a composition bias toward polar residues. The disordered stretch occupies residues 1–69 (MEQKNLNINQ…MRDNIPIVSG (69 aa)). Basic residues predominate over residues 27-43 (SRRRHRPRQGLKRKKGF). The segment at 184-212 (DYQPDVCKDYKLTGYCGYGDTCKFLHMRE) adopts a C3H1-type zinc-finger fold. Residues 254-292 (CLICKKDYRSPIATTCGHHFCEQCAITRYRKTPTCIQCG) form an RING-type zinc finger. Positions 379 to 524 (YFIREITESN…SAFYMVCPLS (146 aa)) constitute an N-acetyltransferase domain.

It belongs to the CWC24 family. As to quaternary structure, belongs to the 40S cdc5-associated complex (or cwf complex), a spliceosome sub-complex reminiscent of a late-stage spliceosome composed of the U2, U5 and U6 snRNAs and at least brr2, cdc5, cwf2/prp3, cwf3/syf1, cwf4/syf3, cwf5/ecm2, spp42/cwf6, cwf7/spf27, cwf8, cwf9, cwf10, cwf11, cwf12, prp45/cwf13, cwf14, cwf15, cwf16, cwf17, cwf18, cwf19, cwf20, cwf21, cwf22, cwf23, cwf24, cwf25, cwf26, cyp7/cwf27, cwf28, cwf29/ist3, lea1, msl1, prp5/cwf1, prp10, prp12/sap130, prp17, prp22, sap61, sap62, sap114, sap145, slu7, smb1, smd1, smd3, smf1, smg1 and syf2.

It is found in the nucleus. In terms of biological role, involved in mRNA splicing. The polypeptide is Pre-mRNA-splicing factor cwf24 (cwf24) (Schizosaccharomyces pombe (strain 972 / ATCC 24843) (Fission yeast)).